Here is a 223-residue protein sequence, read N- to C-terminus: Killer cell lectin-like receptor subfamily B member 1B allele A (223 aa).

Topologically, residues 1 to 43 are cytoplasmic; it reads MDSTTLVYADLNLARIQEPKHDSPPSLSPDTCRCPRWHRLALK. Residues 6-11 carry the ITIM motif motif; the sequence is LVYADL. Positions 32 to 35 match the LCK-binding motif motif; it reads CRCP. A helical; Signal-anchor for type II membrane protein transmembrane segment spans residues 44 to 63; sequence FGCAGLILLVLVVIGLCVLV. At 64–223 the chain is on the extracellular side; that stretch reads LSVQKSSVQK…LNHETPSNDS (160 aa). In terms of domain architecture, C-type lectin spans 93–212; the sequence is ECPQDWLSHR…STDNRWICQK (120 aa). 2 cysteine pairs are disulfide-bonded: Cys122–Cys210 and Cys189–Cys202.

Homodimer; disulfide-linked. Interacts with tyrosine kinase LCK. Binds PTPN6/SHP-1 in a phosphorylation-dependent manner. Expressed in NK cells and a subset of T-cells.

The protein resides in the membrane. In terms of biological role, receptor for CLEC2D/OCIL. Ligand-binding contributes to inhibition of cytotoxic natural killer (NK) cells. May mediate MHC class I-independent 'missing-self' recognition of allografts, tumor cells and virus-infected cells. This chain is Killer cell lectin-like receptor subfamily B member 1B allele A (Klrb1b), found in Mus musculus (Mouse).